Here is a 354-residue protein sequence, read N- to C-terminus: D-alanine--D-alanine ligase (354 aa).

The ATP-grasp domain maps to 133-338; the sequence is KHLFAQAGLP…YSDLIEQLVE (206 aa). 166–221 lines the ATP pocket; it reads EKELGYPCFVKPANLGSSVGISKCRNREELEKAFELAFEYDRKIVVEEGIAGREIE. Mg(2+)-binding residues include Asp-292, Glu-305, and Asn-307.

Belongs to the D-alanine--D-alanine ligase family. The cofactor is Mg(2+). Mn(2+) serves as cofactor.

It is found in the cytoplasm. It catalyses the reaction 2 D-alanine + ATP = D-alanyl-D-alanine + ADP + phosphate + H(+). The protein operates within cell wall biogenesis; peptidoglycan biosynthesis. Its function is as follows. Cell wall formation. The chain is D-alanine--D-alanine ligase from Bacillus velezensis (strain DSM 23117 / BGSC 10A6 / LMG 26770 / FZB42) (Bacillus amyloliquefaciens subsp. plantarum).